The chain runs to 158 residues: Flagellar assembly factor FliW (158 aa).

This sequence belongs to the FliW family. As to quaternary structure, interacts with translational regulator CsrA and flagellin(s).

The protein localises to the cytoplasm. Its function is as follows. Acts as an anti-CsrA protein, binds CsrA and prevents it from repressing translation of its target genes, one of which is flagellin. Binds to flagellin and participates in the assembly of the flagellum. This chain is Flagellar assembly factor FliW, found in Syntrophus aciditrophicus (strain SB).